Consider the following 2462-residue polypeptide: Serine/threonine-protein kinase Wnk (2462 aa).

Disordered stretches follow at residues 18-133 (NRAR…ASKS), 146-248 (NTLP…KSSS), and 365-461 (EDDV…DDDP). 2 stretches are compositionally biased toward polar residues: residues 29–58 (DGTT…NIQK) and 65–78 (NRSA…NPTS). Low complexity predominate over residues 94–124 (TLSAHTSTSSTTSIQSSPIEPASSLPTLNTT). The segment covering 146–155 (NTLPGKTASS) has biased composition (polar residues). 3 stretches are compositionally biased toward basic and acidic residues: residues 190–205 (QSRE…KIEP), 237–247 (DTKKMEARKSS), and 396–413 (QSEK…KAES). A compositionally biased stretch (low complexity) spans 414-452 (SEASAEEAAVTGSSTDASASPLPSTSLVSTTSSATSITK). Positions 471–729 (FKYDKEVGRG…CNELLESEFF (259 aa)) constitute a Protein kinase domain. ATP contacts are provided by residues Ser-481, 551 to 554 (TELM), and Lys-601. Asp-618 (proton acceptor) is an active-site residue. Ser-628 and Ser-632 each carry phosphoserine; by autocatalysis. Disordered regions lie at residues 844 to 873 (LQKQ…DGVK), 893 to 923 (LALS…QPVQ), and 1006 to 1055 (PQQQ…LQQQ). Positions 855–870 (VDEDEEEEEESEDEED) are enriched in acidic residues. Positions 893 to 918 (LALSTNSVEPQQLSTRSNTSIPNSGI) are enriched in polar residues. Low complexity-rich tracts occupy residues 1006-1034 (PQQQ…QPQT) and 1041-1055 (HEQQ…LQQQ). Residues 1142–1178 (AQHQLQQLQQQQLQQQQLQQQQQIQQQQLQQQQLQQQ) adopt a coiled-coil conformation. Polar residues predominate over residues 1236 to 1251 (QGGQVTLSDAQQQQHP). Disordered stretches follow at residues 1236–1256 (QGGQ…FSAV), 1322–1382 (QQQQ…EQIS), 1418–1465 (GALE…PKLS), 1554–1578 (LTRQ…SDIT), 1615–1699 (NIPN…KDKK), 1762–1790 (DTSE…GNQG), 1828–1895 (QASP…SVGS), 1929–1966 (HEKQ…SINQ), and 2122–2229 (THVQ…FIQS). Positions 1559 to 1568 (STFRSHQRHR) are enriched in basic residues. Over residues 1627–1641 (STPPTTTSTMSSSST) the composition is skewed to low complexity. The span at 1642–1674 (ASRDAPNSSNDVTIGSGSVSRKTSTASEYTSLS) shows a compositional bias: polar residues. Composition is skewed to polar residues over residues 1828–1852 (QASP…TKPN), 1861–1894 (SVGQ…NSVG), and 1943–1966 (SATS…SINQ). Positions 2125 to 2136 (QQPSNLQPQQQS) are enriched in low complexity. A compositionally biased stretch (polar residues) spans 2137–2160 (VHPNMTQQPQQTPLNGHPSMVNTL). The span at 2161–2211 (QQQPPQQSLPMQTIQSQQQQHNQMPIISQQQQQQILMQQQQQQGSQQGSQQ) shows a compositional bias: low complexity. The span at 2212 to 2229 (FNLPGTQQTHPQHQFIQS) shows a compositional bias: polar residues.

The protein belongs to the protein kinase superfamily. Ser/Thr protein kinase family. WNK subfamily. Mg(2+) serves as cofactor. Post-translationally, autophosphorylated. Autophosphorylation at Ser-628 and Ser-632 promotes its activity.

It is found in the cytoplasm. It carries out the reaction L-seryl-[protein] + ATP = O-phospho-L-seryl-[protein] + ADP + H(+). The catalysed reaction is L-threonyl-[protein] + ATP = O-phospho-L-threonyl-[protein] + ADP + H(+). Activated in response to hyperosmotic stress: cell shrinkage promotes formation of a membraneless compartment that concentrates wnk-1 with its downstrem substrates. Activation requires autophosphorylation. Autophosphorylation and subsequent activation is inhibited by increases in intracellular Cl(-) or K(+). Serine/threonine-protein kinase component of the WNK-SPAK/OSR1 kinase cascade, which plays an important role in the regulation of electrolyte homeostasis and regulatory volume increase in response to hyperosmotic stress. Wnk mediates regulatory volume increase in response to hyperosmotic stress by acting as a molecular crowding sensor, which senses cell shrinkage and mediates formation of a membraneless compartment by undergoing liquid-liquid phase separation. The membraneless compartment concentrates Wnk with its substrate Fray, promoting Wnk-dependent phosphorylation and activation of downstream kinase Fray. Following activation, Fray catalyzes phosphorylation of ion cotransporters Ncc69 and Irk1, regulating their activity. Phosphorylation of Na-K-Cl cotransporter Ncc69 promotes its activation and ion influx. Involved in circadian rhythms in small ventral lateral (sLNv) pacemaker neurons: in the morning, Wnk activity is repressed by high levels of intracellular chloride; in contrast Wnk activation in the evening promotes the activation of the inwardly rectifying potassium channel Irk1 via Fray. Acts as a positive regulator of the canonical Wnt signaling pathway during wing disk development. The protein is Serine/threonine-protein kinase Wnk of Drosophila melanogaster (Fruit fly).